A 116-amino-acid chain; its full sequence is Large ribosomal subunit protein bL19 (116 aa).

Belongs to the bacterial ribosomal protein bL19 family.

In terms of biological role, this protein is located at the 30S-50S ribosomal subunit interface and may play a role in the structure and function of the aminoacyl-tRNA binding site. The protein is Large ribosomal subunit protein bL19 of Mannheimia succiniciproducens (strain KCTC 0769BP / MBEL55E).